The following is a 352-amino-acid chain: Putative formin-like protein 15b (352 aa).

The region spanning M1 to K350 is the FH2 domain.

This sequence belongs to the formin-like family. Class-II subfamily.

In Arabidopsis thaliana (Mouse-ear cress), this protein is Putative formin-like protein 15b (FH15B).